Here is a 66-residue protein sequence, read N- to C-terminus: MKTNDIRELTTAEIETKVKALKEELFNLRFQLATGQLENPTRIREVRKAIARMKTVVCEREIGINR.

This sequence belongs to the universal ribosomal protein uL29 family.

The chain is Large ribosomal subunit protein uL29 from Bacillus mycoides (strain KBAB4) (Bacillus weihenstephanensis).